The sequence spans 225 residues: Probable molybdenum cofactor guanylyltransferase (225 aa).

Residues 20-22 (LAG), K33, D88, and D117 each bind GTP. D117 provides a ligand contact to Mg(2+).

Belongs to the MobA family. Mg(2+) is required as a cofactor.

The protein localises to the cytoplasm. The catalysed reaction is Mo-molybdopterin + GTP + H(+) = Mo-molybdopterin guanine dinucleotide + diphosphate. In terms of biological role, transfers a GMP moiety from GTP to Mo-molybdopterin (Mo-MPT) cofactor (Moco or molybdenum cofactor) to form Mo-molybdopterin guanine dinucleotide (Mo-MGD) cofactor. This chain is Probable molybdenum cofactor guanylyltransferase, found in Methanosarcina acetivorans (strain ATCC 35395 / DSM 2834 / JCM 12185 / C2A).